The primary structure comprises 137 residues: Large ribosomal subunit protein uL16 (137 aa).

The protein belongs to the universal ribosomal protein uL16 family. In terms of assembly, part of the 50S ribosomal subunit.

In terms of biological role, binds 23S rRNA and is also seen to make contacts with the A and possibly P site tRNAs. This is Large ribosomal subunit protein uL16 from Oleidesulfovibrio alaskensis (strain ATCC BAA-1058 / DSM 17464 / G20) (Desulfovibrio alaskensis).